Reading from the N-terminus, the 134-residue chain is Replication enhancer protein (134 aa).

This sequence belongs to the geminiviridae replication enhancer protein family. Homooligomer. Interacts with the replication-associated protein (REP). Interacts with host proliferating cell nuclear antigen (PCNA). Interacts with host retinoblastoma-related protein 1 (RBR1), and may thereby deregulate the host cell cycle. Oligomerization and interaction with PCNA are necessary for optimal replication enhancement.

Its function is as follows. Increases viral DNA accumulation. Enhances infectivity and symptom expression. This chain is Replication enhancer protein, found in Tomato pseudo-curly top virus (TPCTV).